A 393-amino-acid polypeptide reads, in one-letter code: 5-azacytidine-induced protein 2 (393 aa).

The homodimerization stretch occupies residues 1–198 (MDALVEDDIC…IELQKAKQTD (198 aa)). Residues 40-198 (ALVTAYEDIK…IELQKAKQTD (159 aa)) are a coiled coil. The interval 217 to 258 (SDNMQSAYWELKREMSNLHLVTQVQAELLRKLKTPAAIKKAC) is interaction with TBK1 and IKBKE. Serine 319 carries the phosphoserine modification. Disordered stretches follow at residues 321 to 340 (TDHE…HNSY) and 345 to 393 (LEDN…HYKH). Residue serine 354 is modified to Phosphoserine. Residues 384-393 (QHNQNCHYKH) show a composition bias toward polar residues.

Homodimer. Interacts with IKBKE, TBK1 and TICAM1. Interacts with TAX1BP1. Interacts with CALCOCO2. In terms of processing, ubiquitinated via 'Lys-48'-linked polyubiquitination by TRIM38, leading to its degradation.

The protein localises to the cytoplasm. Its function is as follows. Adapter protein which binds TBK1 and IKBKE playing a role in antiviral innate immunity. Activates serine/threonine-protein kinase TBK1 and facilitates its oligomerization. Enhances the phosphorylation of NF-kappa-B p65 subunit RELA by TBK1. Promotes TBK1-induced as well as TNF-alpha or PMA-induced activation of NF-kappa-B. Participates in IFNB promoter activation via TICAM1. The protein is 5-azacytidine-induced protein 2 (AZI2) of Bos taurus (Bovine).